A 195-amino-acid chain; its full sequence is Dephospho-CoA kinase (195 aa).

In terms of domain architecture, DPCK spans K3–I195. Residue G11–T16 participates in ATP binding.

It belongs to the CoaE family.

It is found in the cytoplasm. The enzyme catalyses 3'-dephospho-CoA + ATP = ADP + CoA + H(+). It functions in the pathway cofactor biosynthesis; coenzyme A biosynthesis; CoA from (R)-pantothenate: step 5/5. Its function is as follows. Catalyzes the phosphorylation of the 3'-hydroxyl group of dephosphocoenzyme A to form coenzyme A. The chain is Dephospho-CoA kinase from Corynebacterium glutamicum (Brevibacterium saccharolyticum).